We begin with the raw amino-acid sequence, 974 residues long: Pentatricopeptide repeat-containing protein At5g61990, mitochondrial (974 aa).

A mitochondrion-targeting transit peptide spans 1-31 (MMGSMLFRKRTLVTRANFLLFRSFSVNVEKL). 24 PPR repeats span residues 96-130 (KLDS…NWPV), 150-184 (DGVL…ELVP), 185-219 (RLSR…NVVF), 220-250 (DVKT…TEKE), 257-275 (NVDG…GLVP), 276-310 (LKYT…GVSL), 311-345 (DNHT…GINI), 346-380 (KPYM…GLIP), 381-415 (QAQA…NIVI), 416-450 (SPYT…GCRP), 451-485 (NVVI…GIAP), 486-520 (DIFC…GLKP), 521-555 (NAFT…GVLP), 556-590 (NKVL…GILG), 591-625 (DAKT…GIAP), 626-660 (DVFS…GLTP), 661-695 (NVII…GLHP), 696-730 (NAVT…GLVP), 731-761 (DSFV…NKKG), 765-799 (STAP…SFDR), 804-838 (NDVT…NLMP), 839-873 (TVIT…GIEP), 874-908 (DHIM…NAVD), and 914-948 (SIST…QYIP).

This sequence belongs to the PPR family. P subfamily.

The protein localises to the mitochondrion. The polypeptide is Pentatricopeptide repeat-containing protein At5g61990, mitochondrial (Arabidopsis thaliana (Mouse-ear cress)).